The sequence spans 157 residues: Ribosomal RNA large subunit methyltransferase H (157 aa).

S-adenosyl-L-methionine contacts are provided by residues L73, G105, and 124–129 (LSKMTF).

This sequence belongs to the RNA methyltransferase RlmH family. As to quaternary structure, homodimer.

It localises to the cytoplasm. The enzyme catalyses pseudouridine(1915) in 23S rRNA + S-adenosyl-L-methionine = N(3)-methylpseudouridine(1915) in 23S rRNA + S-adenosyl-L-homocysteine + H(+). Its function is as follows. Specifically methylates the pseudouridine at position 1915 (m3Psi1915) in 23S rRNA. The protein is Ribosomal RNA large subunit methyltransferase H of Parabacteroides distasonis (strain ATCC 8503 / DSM 20701 / CIP 104284 / JCM 5825 / NCTC 11152).